The chain runs to 69 residues: Putative membrane protein insertion efficiency factor (69 aa).

This sequence belongs to the UPF0161 family.

The protein resides in the cell inner membrane. Functionally, could be involved in insertion of integral membrane proteins into the membrane. This Dechloromonas aromatica (strain RCB) protein is Putative membrane protein insertion efficiency factor.